The primary structure comprises 220 residues: 2-hydroxy-3-keto-5-methylthiopentenyl-1-phosphate phosphatase (220 aa).

It belongs to the HAD-like hydrolase superfamily. MtnX family.

It carries out the reaction 2-hydroxy-5-methylsulfanyl-3-oxopent-1-enyl phosphate + H2O = 1,2-dihydroxy-5-(methylsulfanyl)pent-1-en-3-one + phosphate. It participates in amino-acid biosynthesis; L-methionine biosynthesis via salvage pathway; L-methionine from S-methyl-5-thio-alpha-D-ribose 1-phosphate: step 4/6. In terms of biological role, dephosphorylates 2-hydroxy-3-keto-5-methylthiopentenyl-1-phosphate (HK-MTPenyl-1-P) yielding 1,2-dihydroxy-3-keto-5-methylthiopentene (DHK-MTPene). The protein is 2-hydroxy-3-keto-5-methylthiopentenyl-1-phosphate phosphatase of Geobacillus kaustophilus (strain HTA426).